We begin with the raw amino-acid sequence, 189 residues long: MTEYKLVVVGAGGVGKSALTIQLIQNHFVDEYDPTIEDSYRKQVVIDGETCLLDILDTAGQEEYSAMRDQYMRTGEGFLCVFAINNSKSFADINLYREQIKRVKDSDDVPMVLVGNKCDLPTRTVDTKQAHELAKSYGIPFIETSAKTRQGVEDAFYTLVREIRQYRMKKLNSSEDGTQGCMGLPCVVM.

GTP is bound by residues 10–18 (GAGGVGKSA) and 29–30 (VD). The short motif at 32-40 (YDPTIEDSY) is the Effector region element. 57-61 (DTAGQ) is a GTP binding site. Ser89 carries the phosphoserine modification. GTP is bound at residue 116–119 (NKCD). A hypervariable region region spans residues 166-185 (YRMKKLNSSEDGTQGCMGLP). Residue Lys170 forms a Glycyl lysine isopeptide (Lys-Gly) (interchain with G-Cter in ubiquitin) linkage. Cys181 carries S-palmitoyl cysteine lipidation. Cys186 carries S-farnesyl cysteine lipidation. Residues 187–189 (VVM) constitute a propeptide, removed in mature form.

This sequence belongs to the small GTPase superfamily. Ras family. Interacts (active GTP-bound form preferentially) with RGS14. Interacts (active GTP-bound form) with RASSF7. Interacts (active GTP-bound form) with both SHOC2 and PP1c (all isoforms) to form a tertiary complex; SHOC2 and PP1c preferably bind M-Ras/MRAS, but they also bind K-Ras/KRAS, N-Ras/NRAS and H-Ras/HRAS. Palmitoylated by the ZDHHC9-GOLGA7 complex. Depalmitoylated by ABHD17A, ABHD17B and ABHD17C. A continuous cycle of de- and re-palmitoylation regulates rapid exchange between plasma membrane and Golgi. In terms of processing, acetylation at Lys-104 prevents interaction with guanine nucleotide exchange factors (GEFs). Post-translationally, ubiquitinated by the BCR(LZTR1) E3 ubiquitin ligase complex at Lys-170 in a non-degradative manner, leading to inhibit Ras signaling by decreasing Ras association with membranes. Phosphorylation at Ser-89 enhances NRAS association with its downstream effectors.

It is found in the cell membrane. The protein localises to the golgi apparatus membrane. It catalyses the reaction GTP + H2O = GDP + phosphate + H(+). Alternates between an inactive form bound to GDP and an active form bound to GTP. Activated by a guanine nucleotide-exchange factor (GEF) and inactivated by a GTPase-activating protein (GAP). Functionally, ras proteins bind GDP/GTP and possess intrinsic GTPase activity. In Rattus norvegicus (Rat), this protein is GTPase NRas (Nras).